The chain runs to 145 residues: 3-hydroxyacyl-[acyl-carrier-protein] dehydratase FabZ (145 aa).

The active site involves histidine 47.

Belongs to the thioester dehydratase family. FabZ subfamily.

It is found in the cytoplasm. The enzyme catalyses a (3R)-hydroxyacyl-[ACP] = a (2E)-enoyl-[ACP] + H2O. Functionally, involved in unsaturated fatty acids biosynthesis. Catalyzes the dehydration of short chain beta-hydroxyacyl-ACPs and long chain saturated and unsaturated beta-hydroxyacyl-ACPs. This chain is 3-hydroxyacyl-[acyl-carrier-protein] dehydratase FabZ, found in Acidovorax sp. (strain JS42).